The primary structure comprises 357 residues: 3-dehydroquinate synthase (357 aa).

NAD(+)-binding positions include 104 to 108 (GVVGD), 128 to 129 (TT), Lys-141, and 168 to 171 (FLET). Zn(2+) contacts are provided by Glu-183, His-243, and His-260.

It belongs to the sugar phosphate cyclases superfamily. Dehydroquinate synthase family. NAD(+) is required as a cofactor. Co(2+) serves as cofactor. It depends on Zn(2+) as a cofactor.

It localises to the cytoplasm. The catalysed reaction is 7-phospho-2-dehydro-3-deoxy-D-arabino-heptonate = 3-dehydroquinate + phosphate. It participates in metabolic intermediate biosynthesis; chorismate biosynthesis; chorismate from D-erythrose 4-phosphate and phosphoenolpyruvate: step 2/7. Its function is as follows. Catalyzes the conversion of 3-deoxy-D-arabino-heptulosonate 7-phosphate (DAHP) to dehydroquinate (DHQ). This Streptococcus pyogenes serotype M3 (strain ATCC BAA-595 / MGAS315) protein is 3-dehydroquinate synthase.